Reading from the N-terminus, the 304-residue chain is MASQPAGGSPPKPWEKEGNTSGPNPFRPPSNTSTAGSVEASGTANPGEVVPPPVNRPNTAANMNSLSRPVPARPWEQQNYGSTMGGGYGSNLGMTSGYGSGTYGSALGGYGSSYGGGMYGGSSMYRGGYGGGGLYGSSGMYGGGAMGGYGGTMGGYGMGMGTGMGMGMGMGMGGPYGSQDPNDPFNQPPSPPGFWISFLRVMQGAVNFFGRVAMLIDQNTQAFHMFMSALLQLFDRGGMLYGELARFVLRMLGVRTRPRKMQQPPQGPNGLPLPHQPHGNQNYLEGPKTAAPGGGGGWDNVWGN.

Disordered regions lie at residues 1–78 (MASQ…WEQQ) and 258–304 (PRKM…VWGN). Composition is skewed to polar residues over residues 19 to 44 (NTSG…SGTA) and 56 to 67 (RPNTAANMNSLS). A compositionally biased stretch (low complexity) spans 262 to 279 (QQPPQGPNGLPLPHQPHG).

Belongs to the peroxin-13 family. In terms of assembly, interacts with PEX14; forming the PEX13-PEX14 docking complex. Interacts (via N-terminus) with PEX7, but not with PEX5. Interacts with APEM9 (via N-terminus). Highly expressed in pollen. Detected in shoots, roots, stems, leaves, inflorescences and emasculated postils. Strongly expressed in both male and female gametophytes during fertilization.

The protein resides in the peroxisome membrane. Its function is as follows. Component of the PEX13-PEX14 docking complex, a translocon channel that specifically mediates the import of peroxisomal cargo proteins bound to PEX5 receptor. The PEX13-PEX14 docking complex forms a large import pore which can be opened to a diameter of about 9 nm. Mechanistically, PEX5 receptor along with cargo proteins associates with the PEX14 subunit of the PEX13-PEX14 docking complex in the cytosol, leading to the insertion of the receptor into the organelle membrane with the concomitant translocation of the cargo into the peroxisome matrix. Essential for pollen-tube discharge that take place only in the presence of functional peroxisomes in either the male or the female gametophyte. In Arabidopsis thaliana (Mouse-ear cress), this protein is Peroxisomal membrane protein 13.